The chain runs to 233 residues: Large ribosomal subunit protein uL2 (233 aa).

The interval 194-233 (HPHGGGNHQHVGRPSTVGRGTPPGRKVGRLSPKRRKKYGR) is disordered. Residues 219 to 233 (KVGRLSPKRRKKYGR) are compositionally biased toward basic residues.

It belongs to the universal ribosomal protein uL2 family. As to quaternary structure, part of the 50S ribosomal subunit. Forms a bridge to the 30S subunit in the 70S ribosome.

One of the primary rRNA binding proteins. Required for association of the 30S and 50S subunits to form the 70S ribosome, for tRNA binding and peptide bond formation. It has been suggested to have peptidyltransferase activity; this is somewhat controversial. Makes several contacts with the 16S rRNA in the 70S ribosome. The protein is Large ribosomal subunit protein uL2 of Picrophilus torridus (strain ATCC 700027 / DSM 9790 / JCM 10055 / NBRC 100828 / KAW 2/3).